A 381-amino-acid polypeptide reads, in one-letter code: Queuine tRNA-ribosyltransferase (381 aa).

D92 functions as the Proton acceptor in the catalytic mechanism. Substrate contacts are provided by residues 92–96 (DSGGF), D146, Q190, and G217. The interval 248-254 (GVGRPED) is RNA binding. The active-site Nucleophile is D267. Positions 272-276 (TRNAR) are RNA binding; important for wobble base 34 recognition. Zn(2+)-binding residues include C305, C307, C310, and H337.

This sequence belongs to the queuine tRNA-ribosyltransferase family. In terms of assembly, homodimer. Within each dimer, one monomer is responsible for RNA recognition and catalysis, while the other monomer binds to the replacement base PreQ1. Requires Zn(2+) as cofactor.

It carries out the reaction 7-aminomethyl-7-carbaguanine + guanosine(34) in tRNA = 7-aminomethyl-7-carbaguanosine(34) in tRNA + guanine. The protein operates within tRNA modification; tRNA-queuosine biosynthesis. Functionally, catalyzes the base-exchange of a guanine (G) residue with the queuine precursor 7-aminomethyl-7-deazaguanine (PreQ1) at position 34 (anticodon wobble position) in tRNAs with GU(N) anticodons (tRNA-Asp, -Asn, -His and -Tyr). Catalysis occurs through a double-displacement mechanism. The nucleophile active site attacks the C1' of nucleotide 34 to detach the guanine base from the RNA, forming a covalent enzyme-RNA intermediate. The proton acceptor active site deprotonates the incoming PreQ1, allowing a nucleophilic attack on the C1' of the ribose to form the product. After dissociation, two additional enzymatic reactions on the tRNA convert PreQ1 to queuine (Q), resulting in the hypermodified nucleoside queuosine (7-(((4,5-cis-dihydroxy-2-cyclopenten-1-yl)amino)methyl)-7-deazaguanosine). The sequence is that of Queuine tRNA-ribosyltransferase from Xanthomonas oryzae pv. oryzae (strain MAFF 311018).